The following is a 98-amino-acid chain: NADH-ubiquinone oxidoreductase chain 4L (98 aa).

3 helical membrane passes run 1-21 (MTPT…GMLT), 27-47 (VASL…ATLI), and 61-81 (IILL…LISI).

It belongs to the complex I subunit 4L family. Core subunit of respiratory chain NADH dehydrogenase (Complex I) which is composed of 45 different subunits.

It is found in the mitochondrion inner membrane. The catalysed reaction is a ubiquinone + NADH + 5 H(+)(in) = a ubiquinol + NAD(+) + 4 H(+)(out). In terms of biological role, core subunit of the mitochondrial membrane respiratory chain NADH dehydrogenase (Complex I) which catalyzes electron transfer from NADH through the respiratory chain, using ubiquinone as an electron acceptor. Part of the enzyme membrane arm which is embedded in the lipid bilayer and involved in proton translocation. The protein is NADH-ubiquinone oxidoreductase chain 4L (MT-ND4L) of Macaca fascicularis (Crab-eating macaque).